The primary structure comprises 200 residues: Inner membrane protein E199L (200 aa).

Asn-131 carries an N-linked (GlcNAc...) asparagine; by host glycan. A helical membrane pass occupies residues 150–170 (INVMNHPFLTLILIILILIII).

This sequence belongs to the asfivirus E199L family. As to quaternary structure, interacts with host PYCR2; this interaction results in autophagy activation. In terms of processing, contains intramolecular disulfide bonds.

It localises to the virion membrane. The protein resides in the host membrane. Its function is as follows. Essential for viral fusion with host endosomal membrane and core release. Not required for virus morphogenesis and egress. Induces complete autophagy through the interaction with and down-regulation of host PYCR2. In Ornithodoros (relapsing fever ticks), this protein is Inner membrane protein E199L.